The sequence spans 332 residues: DNA-directed RNA polymerase subunit alpha (332 aa).

Positions 1 to 234 are alpha N-terminal domain (alpha-NTD); that stretch reads MTVTISQVLR…DQLSVFGDFT (234 aa). The segment at 248-332 is alpha C-terminal domain (alpha-CTD); it reads VDPVLLRPID…PGVSQYGMLG (85 aa).

Belongs to the RNA polymerase alpha chain family. Homodimer. The RNAP catalytic core consists of 2 alpha, 1 beta, 1 beta' and 1 omega subunit. When a sigma factor is associated with the core the holoenzyme is formed, which can initiate transcription.

It carries out the reaction RNA(n) + a ribonucleoside 5'-triphosphate = RNA(n+1) + diphosphate. DNA-dependent RNA polymerase catalyzes the transcription of DNA into RNA using the four ribonucleoside triphosphates as substrates. The protein is DNA-directed RNA polymerase subunit alpha of Xylella fastidiosa (strain M12).